The following is a 207-amino-acid chain: Protein Nef (207 aa).

Gly2 carries N-myristoyl glycine; by host lipidation. A Phosphoserine; by host modification is found at Ser6. The segment at 62 to 66 (EESEE) is acidic; interacts with host PACS1 and PACS2; stabilizes the interaction of NEF/MHC-I with host AP1M1; necessary for MHC-I internalization. Residues 70 to 79 (PVRPQVPLRP) form an SH3-binding; interaction with Src family tyrosine kinases region. A PxxP; stabilizes the interaction of NEF/MHC-I with host AP1M1; necessary for MHC-I internalization motif is present at residues 73–76 (PQVP). The interval 109 to 125 (EILDLWVYNTQGIFPDW) is mediates dimerization, Nef-PTE1 interaction. Residues 149-181 (VDPQEVEEATEREDNCLLHPMCQQGMEDPERQV) are binding to ATP6V1H. The short motif at 165–166 (LL) is the Dileucine internalization motif; necessary for CD4 internalization element. The Diacidic; necessary for CD4 internalization motif lies at 175-176 (ED).

This sequence belongs to the lentivirus primate group Nef protein family. Monomer; cytosolic form. Homodimer; membrane bound form. Interacts with Nef associated p21-activated kinase (PAK2); this interaction activates PAK2. Associates with the Nef-MHC-I-AP1 complex; this complex is required for MHC-I internalization. Interacts (via C-terminus) with host PI3-kinase. Interacts with host PACS1; this interaction seems to be weak. Interacts with host PACS2. Interacts with host LCK and MAPK3; these interactions inhibit the kinase activity of the latter. Interacts with host ATP6V1H; this interaction may play a role in CD4 endocytosis. Associates with the CD4-Nef-AP2 complex; this complex is required for CD4 internalization. Interacts with host AP2 subunit alpha and AP2 subunit sigma2. Interacts with TCR-zeta chain; this interaction up-regulates the Fas ligand (FasL) surface expression. Interacts with host HCK, LYN, and SRC; these interactions activate the Src family kinases. Interacts with MAP3K5; this interaction inhibits the Fas and TNFR-mediated death signals. Interacts with beta-COP and PTE1. Interacts with human RACK1; this increases Nef phosphorylation by PKC. Interacts with TP53; this interaction decreases the half-life of TP53, protecting the infected cell against p53-mediated apoptosis. In terms of processing, the virion-associated Nef proteins are cleaved by the viral protease to release the soluble C-terminal core protein. Nef is probably cleaved concomitantly with viral structural proteins on maturation of virus particles. Post-translationally, myristoylated. Phosphorylated on serine residues, probably by host PKCdelta and theta.

It is found in the host cell membrane. The protein resides in the virion. Its subcellular location is the secreted. It localises to the host Golgi apparatus membrane. Functionally, factor of infectivity and pathogenicity, required for optimal virus replication. Alters numerous pathways of T-lymphocyte function and down-regulates immunity surface molecules in order to evade host defense and increase viral infectivity. Alters the functionality of other immunity cells, like dendritic cells, monocytes/macrophages and NK cells. Its function is as follows. In infected CD4(+) T-lymphocytes, down-regulates the surface MHC-I, mature MHC-II, CD4, CD28, CCR5 and CXCR4 molecules. Mediates internalization and degradation of host CD4 through the interaction of with the cytoplasmic tail of CD4, the recruitment of AP-2 (clathrin adapter protein complex 2), internalization through clathrin coated pits, and subsequent transport to endosomes and lysosomes for degradation. Diverts host MHC-I molecules to the trans-Golgi network-associated endosomal compartments by an endocytic pathway to finally target them for degradation. MHC-I down-regulation may involve AP-1 (clathrin adapter protein complex 1) or possibly Src family kinase-ZAP70/Syk-PI3K cascade recruited by PACS2. In consequence infected cells are masked for immune recognition by cytotoxic T-lymphocytes. Decreasing the number of immune receptors also prevents reinfection by more HIV particles (superinfection). Down-regulates host SERINC3 and SERINC5 thereby excluding these proteins from the viral particles. Virion infectivity is drastically higher when SERINC3 or SERINC5 are excluded from the viral envelope, because these host antiviral proteins impair the membrane fusion event necessary for subsequent virion penetration. Bypasses host T-cell signaling by inducing a transcriptional program nearly identical to that of anti-CD3 cell activation. Interaction with TCR-zeta chain up-regulates the Fas ligand (FasL). Increasing surface FasL molecules and decreasing surface MHC-I molecules on infected CD4(+) cells send attacking cytotoxic CD8+ T-lymphocytes into apoptosis. In terms of biological role, plays a role in optimizing the host cell environment for viral replication without causing cell death by apoptosis. Protects the infected cells from apoptosis in order to keep them alive until the next virus generation is ready to strike. Inhibits the Fas and TNFR-mediated death signals by blocking MAP3K5/ASK1. Decreases the half-life of TP53, protecting the infected cell against p53-mediated apoptosis. Inhibits the apoptotic signals regulated by the Bcl-2 family proteins through the formation of a Nef/PI3-kinase/PAK2 complex that leads to activation of PAK2 and induces phosphorylation of host BAD. Functionally, extracellular Nef protein targets CD4(+) T-lymphocytes for apoptosis by interacting with CXCR4 surface receptors. The polypeptide is Protein Nef (Human immunodeficiency virus type 1 group M subtype D (isolate NDK) (HIV-1)).